Consider the following 222-residue polypeptide: Dense granule protein 3 (222 aa).

A run of 2 helical transmembrane segments spans residues 22–42 (LIPFLVPFVVFLVAAALGGLA) and 162–182 (IPGYFVVINAILAAYYIRKVL). Positions 219-222 (KKQT) match the Prevents secretion from ER motif.

Homodimer. Interacts (via N-terminus) with human host CAMLG (via N-terminus).

It is found in the cytoplasm. The protein resides in the host endoplasmic reticulum. It localises to the parasitophorous vacuole membrane. In terms of biological role, direct host-parasite interaction occurs at the cytoplasmic faces of the parasitophorous vacuole membrane (PVM) and the host endoplasmic reticulum (ER) membrane via GRA3 and host CAMLG association. Direct insertion of GRA3 ER retrieval motif into the host ER membrane contributes to the host ER recruitment to the PVM. In Toxoplasma gondii, this protein is Dense granule protein 3.